The sequence spans 289 residues: 4-hydroxy-3-methylbut-2-enyl diphosphate reductase (289 aa).

Cys12 is a binding site for [4Fe-4S] cluster. (2E)-4-hydroxy-3-methylbut-2-enyl diphosphate-binding residues include His41 and His84. Dimethylallyl diphosphate-binding residues include His41 and His84. Residues His41 and His84 each coordinate isopentenyl diphosphate. [4Fe-4S] cluster is bound at residue Cys106. A (2E)-4-hydroxy-3-methylbut-2-enyl diphosphate-binding site is contributed by His134. His134 lines the dimethylallyl diphosphate pocket. His134 is a binding site for isopentenyl diphosphate. Glu136 serves as the catalytic Proton donor. A (2E)-4-hydroxy-3-methylbut-2-enyl diphosphate-binding site is contributed by Ser172. Cys200 contacts [4Fe-4S] cluster. Residues Ser229, Asn231, and Ser273 each contribute to the (2E)-4-hydroxy-3-methylbut-2-enyl diphosphate site. Residues Ser229, Asn231, and Ser273 each coordinate dimethylallyl diphosphate. Isopentenyl diphosphate is bound by residues Ser229, Asn231, and Ser273.

Belongs to the IspH family. It depends on [4Fe-4S] cluster as a cofactor.

The enzyme catalyses isopentenyl diphosphate + 2 oxidized [2Fe-2S]-[ferredoxin] + H2O = (2E)-4-hydroxy-3-methylbut-2-enyl diphosphate + 2 reduced [2Fe-2S]-[ferredoxin] + 2 H(+). The catalysed reaction is dimethylallyl diphosphate + 2 oxidized [2Fe-2S]-[ferredoxin] + H2O = (2E)-4-hydroxy-3-methylbut-2-enyl diphosphate + 2 reduced [2Fe-2S]-[ferredoxin] + 2 H(+). The protein operates within isoprenoid biosynthesis; dimethylallyl diphosphate biosynthesis; dimethylallyl diphosphate from (2E)-4-hydroxy-3-methylbutenyl diphosphate: step 1/1. It participates in isoprenoid biosynthesis; isopentenyl diphosphate biosynthesis via DXP pathway; isopentenyl diphosphate from 1-deoxy-D-xylulose 5-phosphate: step 6/6. Catalyzes the conversion of 1-hydroxy-2-methyl-2-(E)-butenyl 4-diphosphate (HMBPP) into a mixture of isopentenyl diphosphate (IPP) and dimethylallyl diphosphate (DMAPP). Acts in the terminal step of the DOXP/MEP pathway for isoprenoid precursor biosynthesis. The sequence is that of 4-hydroxy-3-methylbut-2-enyl diphosphate reductase from Opitutus terrae (strain DSM 11246 / JCM 15787 / PB90-1).